Reading from the N-terminus, the 309-residue chain is tRNA dimethylallyltransferase 1 (309 aa).

An ATP-binding site is contributed by 14 to 21; sequence GPTASGKS. 16 to 21 lines the substrate pocket; it reads TASGKS. Residues 39 to 42 are interaction with substrate tRNA; the sequence is DSMQ.

This sequence belongs to the IPP transferase family. As to quaternary structure, monomer. The cofactor is Mg(2+).

The catalysed reaction is adenosine(37) in tRNA + dimethylallyl diphosphate = N(6)-dimethylallyladenosine(37) in tRNA + diphosphate. In terms of biological role, catalyzes the transfer of a dimethylallyl group onto the adenine at position 37 in tRNAs that read codons beginning with uridine, leading to the formation of N6-(dimethylallyl)adenosine (i(6)A). This is tRNA dimethylallyltransferase 1 from Pelobacter propionicus (strain DSM 2379 / NBRC 103807 / OttBd1).